We begin with the raw amino-acid sequence, 421 residues long: Fusaric acid cluster transcription factor FUB10 (421 aa).

The zn(2)-C6 fungal-type DNA-binding region spans Cys-16–Cys-47. The tract at residues Ser-50–Met-92 is disordered. Residues Thr-74 to Ser-86 are compositionally biased toward low complexity.

It localises to the nucleus. In terms of biological role, transcription factor that regulates the expression of the gene cluster that mediates the biosynthesis of fusaric acid, a mycotoxin with low to moderate toxicity to animals and humans, but with high phytotoxic properties. The chain is Fusaric acid cluster transcription factor FUB10 from Gibberella moniliformis (strain M3125 / FGSC 7600) (Maize ear and stalk rot fungus).